The following is a 623-amino-acid chain: ATP-dependent lipid A-core flippase (623 aa).

5 consecutive transmembrane segments (helical) span residues 66-86, 103-123, 190-210, 290-310, and 317-337; these read LVLA…LAVI, VWFL…CNFF, LVVI…TLII, LTPL…AVAL, and ALTV…FDPI. The ABC transmembrane type-1 domain occupies 67–349; that stretch reads VLAVLLMAGA…LTNLAGKMQK (283 aa). The ABC transporter domain occupies 382-618; it reads VEFRAVSHRF…NGLYASLYNM (237 aa). Residue 416–423 coordinates ATP; the sequence is GRSGSGKT.

It belongs to the ABC transporter superfamily. Lipid exporter (TC 3.A.1.106) family. In terms of assembly, homodimer.

It is found in the cell inner membrane. The enzyme catalyses ATP + H2O + lipid A-core oligosaccharideSide 1 = ADP + phosphate + lipid A-core oligosaccharideSide 2.. Involved in lipopolysaccharide (LPS) biosynthesis. Translocates lipid A-core from the inner to the outer leaflet of the inner membrane. Transmembrane domains (TMD) form a pore in the inner membrane and the ATP-binding domain (NBD) is responsible for energy generation. This Bordetella pertussis (strain Tohama I / ATCC BAA-589 / NCTC 13251) protein is ATP-dependent lipid A-core flippase.